A 179-amino-acid polypeptide reads, in one-letter code: Inorganic pyrophosphatase (179 aa).

Residues lysine 30, arginine 44, and tyrosine 56 each contribute to the substrate site. The Mg(2+) site is built by aspartate 66, aspartate 71, and aspartate 103. Tyrosine 142 contacts substrate.

The protein belongs to the PPase family. As to quaternary structure, homohexamer. Requires Mg(2+) as cofactor.

The protein localises to the cytoplasm. It catalyses the reaction diphosphate + H2O = 2 phosphate + H(+). In terms of biological role, catalyzes the hydrolysis of inorganic pyrophosphate (PPi) forming two phosphate ions. The protein is Inorganic pyrophosphatase of Rhodospirillum rubrum (strain ATCC 11170 / ATH 1.1.1 / DSM 467 / LMG 4362 / NCIMB 8255 / S1).